The chain runs to 204 residues: Large ribosomal subunit protein eL15 (204 aa).

It belongs to the eukaryotic ribosomal protein eL15 family.

The sequence is that of Large ribosomal subunit protein eL15 (RPL15) from Tetrahymena thermophila (strain SB210).